The chain runs to 351 residues: MNPTWWRDACQPLDTAAMDQARARQQQLTKPAGSLGQLEALAVHLAGLQGVERPNLDQVAITIFAGDHGVVEEGISAYPQAVTGQMLRNFVGGGAAISVLARQLQASLEVVDLGTIDPHLELPGVRHLRLGSGTANFARQPAMTEVQLRSALQAGRDSVLRAAQSGAQLFIGGEMGIGNTTAAAALASTLLGCPARELSGPGTGLDTAGVRHKAEVIERALVLHGLRADDPLQALGCVGGFEIAALAGAYLACAQQGIAVLVDGFICSVAALVAVRLNPQCRAWLLFAHQGAEPGHKALLDALQAEPLLALGLRLGEGSGAALAVPLLRLACVLHGQMATFAEAAVADRPV.

Glu317 (proton acceptor) is an active-site residue.

Belongs to the CobT family.

It carries out the reaction 5,6-dimethylbenzimidazole + nicotinate beta-D-ribonucleotide = alpha-ribazole 5'-phosphate + nicotinate + H(+). Its pathway is nucleoside biosynthesis; alpha-ribazole biosynthesis; alpha-ribazole from 5,6-dimethylbenzimidazole: step 1/2. Catalyzes the synthesis of alpha-ribazole-5'-phosphate from nicotinate mononucleotide (NAMN) and 5,6-dimethylbenzimidazole (DMB). The protein is Nicotinate-nucleotide--dimethylbenzimidazole phosphoribosyltransferase of Pseudomonas putida (strain W619).